Consider the following 985-residue polypeptide: UPF0182 protein cgR_0895 (985 aa).

The next 7 helical transmembrane spans lie at 19-39 (VTWI…SVGF), 63-83 (IVLF…AGYF), 115-135 (VMVL…QRSW), 176-196 (SMML…MGGI), 215-235 (TQLA…YWLD), 262-282 (KIIL…AIFL), and 290-310 (LAVV…PLML). The segment at 906–944 (AQDIEEVDGTTTTPSTDETDTDTDQPATETPTAPVSEAE) is disordered. A compositionally biased stretch (low complexity) spans 929-939 (DQPATETPTAP).

It belongs to the UPF0182 family.

Its subcellular location is the cell membrane. The chain is UPF0182 protein cgR_0895 from Corynebacterium glutamicum (strain R).